A 503-amino-acid polypeptide reads, in one-letter code: UDP-N-acetylmuramoylalanine--D-glutamate ligase (503 aa).

129–135 is an ATP binding site; the sequence is GTNGKTT.

Belongs to the MurCDEF family.

Its subcellular location is the cytoplasm. It catalyses the reaction UDP-N-acetyl-alpha-D-muramoyl-L-alanine + D-glutamate + ATP = UDP-N-acetyl-alpha-D-muramoyl-L-alanyl-D-glutamate + ADP + phosphate + H(+). It participates in cell wall biogenesis; peptidoglycan biosynthesis. In terms of biological role, cell wall formation. Catalyzes the addition of glutamate to the nucleotide precursor UDP-N-acetylmuramoyl-L-alanine (UMA). The polypeptide is UDP-N-acetylmuramoylalanine--D-glutamate ligase (Burkholderia multivorans (strain ATCC 17616 / 249)).